A 963-amino-acid chain; its full sequence is Protocadherin alpha-C1 (963 aa).

The first 18 residues, 1 to 18 (MVGCGVAVLCLWVSCGAA), serve as a signal peptide directing secretion. Cadherin domains lie at 19–124 (AGQL…SPLF), 125–233 (PAGD…APVF), 234–340 (ERSV…APEL), 349–445 (VPED…TPNF), and 446–555 (PQPQ…YPVI). The Extracellular segment spans residues 19–683 (AGQLEYSVPE…GGQLSAQNLY (665 aa)). Asn38 carries an N-linked (GlcNAc...) asparagine glycan. N-linked (GlcNAc...) asparagine glycosylation is found at Asn248 and Asn274. N-linked (GlcNAc...) asparagine glycosylation is present at Asn562. One can recognise a Cadherin 6 domain in the interval 570–667 (VPRSARTGHL…NSVPQLLPDF (98 aa)). The chain crosses the membrane as a helical span at residues 684–704 (LVIALACISFLFLGCLLFFVC). At 705 to 963 (TKLHQSPGCC…GNSTTDNSDQ (259 aa)) the chain is on the cytoplasmic side. PXXP repeat units follow at residues 812 to 815 (PRQP), 845 to 848 (PGGP), 886 to 889 (PGNP), and 904 to 907 (PGSP). Positions 812–907 (PRQPNPDWRY…PDKFIIPGSP (96 aa)) are 4 X 4 AA repeats of P-X-X-P. Residues 844–963 (GPGGPDQQWP…GNSTTDNSDQ (120 aa)) form a disordered region. Positions 922–936 (DKSDFITFGKKEETK) are enriched in basic and acidic residues.

It localises to the cell membrane. Its function is as follows. Potential calcium-dependent cell-adhesion protein. May be involved in the establishment and maintenance of specific neuronal connections in the brain. The chain is Protocadherin alpha-C1 (PCDHAC1) from Homo sapiens (Human).